The following is a 1188-amino-acid chain: DNA-directed RNA polymerase subunit beta (1188 aa).

A disordered region spans residues 1149-1188 (ELRDLDEGEDDDVMHVDDLEKAREKQAQETPEVSENSEEK). The span at 1161 to 1175 (VMHVDDLEKAREKQA) shows a compositional bias: basic and acidic residues.

It belongs to the RNA polymerase beta chain family. In terms of assembly, the RNAP catalytic core consists of 2 alpha, 1 beta, 1 beta' and 1 omega subunit. When a sigma factor is associated with the core the holoenzyme is formed, which can initiate transcription.

It carries out the reaction RNA(n) + a ribonucleoside 5'-triphosphate = RNA(n+1) + diphosphate. Its function is as follows. DNA-dependent RNA polymerase catalyzes the transcription of DNA into RNA using the four ribonucleoside triphosphates as substrates. The protein is DNA-directed RNA polymerase subunit beta of Streptococcus uberis (strain ATCC BAA-854 / 0140J).